Here is a 532-residue protein sequence, read N- to C-terminus: MTADLGTTADLSTAPATGGLLAADAPSVVQSIDWLAVAPPTLTALAALAVLVADLFLPAHRKRLLGYAALTALAAALALLIPLRAGDRATFCVTTGTRACSYTADHFTLVIQALVLGGALLTVLLSLDDTRKLPAGEYWFLLLASAAGAALLPASRDLATLVVALEVASLPAFALVGIKRGDRRSSEAALKFFLSSVVATAVMLLGVSFVYATTGTLHLTEIATRLDDVPPVLDTLARTGVALTLVGFAFKTAAAPFHFWVPDTYVGAPLPIAAYLSVVGKAVGFSGLILVTVVAFPSYADVWGPALAVLAALTMTAGNVAALRQNAARARSAVRLLAWSSVAQAGYLLVPIAAAAYSSDDQIGSTVAYALMYAVVNLGAFAVAAVVARTHPGNRLTDYRGLYATRPLAALALGFFLLCLAGLPPGIIGLFAKVTVFSAAVDAGLGWLAVVMAVNVVIALYYYLQWTAILFRAPEGAPETTGTATAPTASAPPRRFRAPTPLTTAIVLTATAGILLSGVPQTVLRFASVSLF.

14 helical membrane-spanning segments follow: residues 37 to 57, 63 to 83, 107 to 127, 133 to 153, 158 to 178, 192 to 212, 241 to 261, 276 to 296, 302 to 322, 336 to 356, 367 to 387, 411 to 431, 444 to 464, and 504 to 524; these read VAPP…DLFL, RLLG…LIPL, FTLV…LLSL, LPAG…ALLP, LATL…LVGI, FFLS…FVYA, VALT…HFWV, LSVV…VVAF, VWGP…NVAA, LLAW…AAAA, VAYA…AAVV, LALG…IGLF, GLGW…YYYL, and TAIV…QTVL.

Belongs to the complex I subunit 2 family. In terms of assembly, NDH-1 is composed of 14 different subunits. Subunits NuoA, H, J, K, L, M, N constitute the membrane sector of the complex.

The protein resides in the cell membrane. The enzyme catalyses a quinone + NADH + 5 H(+)(in) = a quinol + NAD(+) + 4 H(+)(out). Its function is as follows. NDH-1 shuttles electrons from NADH, via FMN and iron-sulfur (Fe-S) centers, to quinones in the respiratory chain. The immediate electron acceptor for the enzyme in this species is believed to be a menaquinone. Couples the redox reaction to proton translocation (for every two electrons transferred, four hydrogen ions are translocated across the cytoplasmic membrane), and thus conserves the redox energy in a proton gradient. The polypeptide is NADH-quinone oxidoreductase subunit N 2 (Streptomyces griseus subsp. griseus (strain JCM 4626 / CBS 651.72 / NBRC 13350 / KCC S-0626 / ISP 5235)).